The primary structure comprises 2539 residues: Zinc finger FYVE domain-containing protein 26 (2539 aa).

4 positions are modified to phosphoserine: Ser-297, Ser-615, Ser-619, and Ser-703. 3 disordered regions span residues 594–637 (HLPE…SLGV), 699–724 (ISSR…GLQS), and 738–806 (WRHK…SLSA). Residues 764–774 (PSLRRGRRTRR) are compositionally biased toward basic residues. Over residues 787-805 (SLESTSSELSTSTSEGSLS) the composition is skewed to low complexity. Ser-800 is subject to Phosphoserine. The stretch at 868–895 (MFMERYQEVIQELAQVEHKIENQNSDAG) forms a coiled coil. The segment at 1267–1296 (DLPLSTPSSPRTTENPTLERKPYSSPRDSS) is disordered. The span at 1271–1282 (STPSSPRTTENP) shows a compositional bias: polar residues. Phosphoserine is present on residues Ser-1742, Ser-1764, Ser-1780, and Ser-1782. Positions 1754–1808 (ADPETLPRSPSAEFSPAAPPGISSIHSPSLRERSFPPTQPSQEFVPPATPPARHQ) are disordered. A compositionally biased stretch (low complexity) spans 1760–1769 (PRSPSAEFSP). The FYVE-type zinc finger occupies 1812–1872 (DETESICMVC…VCDQCYSYCN (61 aa)). Zn(2+)-binding residues include Cys-1818, Cys-1821, Cys-1835, Cys-1838, Cys-1843, Cys-1846, Cys-1864, and Cys-1867.

In terms of assembly, interacts with AP5Z1, AP5B1, AP5S1 and SPG11. Interacts with TTC19 and KIF13A. As to expression, strongest expression in the adrenal gland, bone marrow, adult brain, fetal brain, lung, placenta, prostate, skeletal muscle, testis, thymus, and retina. Intermediate levels are detected in other structures, including the spinal cord.

It localises to the cytoplasm. The protein resides in the cytoskeleton. It is found in the microtubule organizing center. The protein localises to the centrosome. Its subcellular location is the midbody. Its function is as follows. Phosphatidylinositol 3-phosphate-binding protein required for the abscission step in cytokinesis: recruited to the midbody during cytokinesis and acts as a regulator of abscission. May also be required for efficient homologous recombination DNA double-strand break repair. In Homo sapiens (Human), this protein is Zinc finger FYVE domain-containing protein 26 (ZFYVE26).